A 264-amino-acid chain; its full sequence is Glucosamine-6-phosphate deaminase (264 aa).

Aspartate 67 (proton acceptor; for enolization step) is an active-site residue. The active-site For ring-opening step is the asparagine 136. Residue histidine 138 is the Proton acceptor; for ring-opening step of the active site. Glutamate 143 serves as the catalytic For ring-opening step.

Belongs to the glucosamine/galactosamine-6-phosphate isomerase family. NagB subfamily. Homohexamer.

The catalysed reaction is alpha-D-glucosamine 6-phosphate + H2O = beta-D-fructose 6-phosphate + NH4(+). It functions in the pathway amino-sugar metabolism; N-acetylneuraminate degradation; D-fructose 6-phosphate from N-acetylneuraminate: step 5/5. In terms of biological role, catalyzes the reversible isomerization-deamination of glucosamine 6-phosphate (GlcN6P) to form fructose 6-phosphate (Fru6P) and ammonium ion. This chain is Glucosamine-6-phosphate deaminase, found in Shewanella woodyi (strain ATCC 51908 / MS32).